The sequence spans 150 residues: uncharacterized protein (150 aa).

The HTH asnC-type domain maps to leucine 5–glycine 66. The segment at residues isoleucine 24–lysine 43 is a DNA-binding region (H-T-H motif).

This is an uncharacterized protein from Pyrococcus horikoshii (strain ATCC 700860 / DSM 12428 / JCM 9974 / NBRC 100139 / OT-3).